The primary structure comprises 422 residues: Glucose-1-phosphate adenylyltransferase (422 aa).

Residues Tyr109, Gly175, 190 to 191 (EK), and Ser208 each bind alpha-D-glucose 1-phosphate.

This sequence belongs to the bacterial/plant glucose-1-phosphate adenylyltransferase family. Homotetramer.

The catalysed reaction is alpha-D-glucose 1-phosphate + ATP + H(+) = ADP-alpha-D-glucose + diphosphate. Its pathway is glycan biosynthesis; glycogen biosynthesis. Its function is as follows. Involved in the biosynthesis of ADP-glucose, a building block required for the elongation reactions to produce glycogen. Catalyzes the reaction between ATP and alpha-D-glucose 1-phosphate (G1P) to produce pyrophosphate and ADP-Glc. This Shewanella amazonensis (strain ATCC BAA-1098 / SB2B) protein is Glucose-1-phosphate adenylyltransferase.